Here is a 771-residue protein sequence, read N- to C-terminus: Ribonucleoside-diphosphate reductase large subunit (771 aa).

In terms of domain architecture, ATP-cone spans 1–92; the sequence is MFVIKRNGYK…VSNLHKETKK (92 aa). Residues 5–6, 11–17, Thr-53, Asp-57, and Lys-88 contribute to the ATP site; these read KR and ENVMFDK. Ser-202 and Ser-217 together coordinate GDP. DTTP contacts are provided by residues 226-228, Lys-243, and Arg-256; that span reads DSI. Asn-427 serves as a coordination point for GDP. Residue Asn-427 is the Proton acceptor of the active site. Cys-429 acts as the Cysteine radical intermediate in catalysis. Residues Glu-431 and 603–606 contribute to the GDP site; that span reads TAST. Residue Glu-431 is the Proton acceptor of the active site.

It belongs to the ribonucleoside diphosphate reductase large chain family. Interacts with RNR2/OPG047 subunit. It depends on Mg(2+) as a cofactor.

The catalysed reaction is a 2'-deoxyribonucleoside 5'-diphosphate + [thioredoxin]-disulfide + H2O = a ribonucleoside 5'-diphosphate + [thioredoxin]-dithiol. Functionally, ribonucleoside-diphosphate reductase holoenzyme provides the precursors necessary for viral DNA synthesis. Allows virus growth in non-dividing cells. Catalyzes the biosynthesis of deoxyribonucleotides from the corresponding ribonucleotides. In Homo sapiens (Human), this protein is Ribonucleoside-diphosphate reductase large subunit (OPG080).